The sequence spans 348 residues: Methylthioribose-1-phosphate isomerase (348 aa).

Substrate contacts are provided by residues arginine 53–alanine 55, arginine 93, and glutamine 197. The active-site Proton donor is the aspartate 238. A substrate-binding site is contributed by asparagine 248–lysine 249.

The protein belongs to the eIF-2B alpha/beta/delta subunits family. MtnA subfamily.

The catalysed reaction is 5-(methylsulfanyl)-alpha-D-ribose 1-phosphate = 5-(methylsulfanyl)-D-ribulose 1-phosphate. Its pathway is amino-acid biosynthesis; L-methionine biosynthesis via salvage pathway; L-methionine from S-methyl-5-thio-alpha-D-ribose 1-phosphate: step 1/6. Catalyzes the interconversion of methylthioribose-1-phosphate (MTR-1-P) into methylthioribulose-1-phosphate (MTRu-1-P). In Gloeobacter violaceus (strain ATCC 29082 / PCC 7421), this protein is Methylthioribose-1-phosphate isomerase.